A 460-amino-acid polypeptide reads, in one-letter code: Argininosuccinate lyase (460 aa).

Belongs to the lyase 1 family. Argininosuccinate lyase subfamily.

Its subcellular location is the cytoplasm. It catalyses the reaction 2-(N(omega)-L-arginino)succinate = fumarate + L-arginine. Its pathway is amino-acid biosynthesis; L-arginine biosynthesis; L-arginine from L-ornithine and carbamoyl phosphate: step 3/3. This chain is Argininosuccinate lyase, found in Lacticaseibacillus paracasei (strain ATCC 334 / BCRC 17002 / CCUG 31169 / CIP 107868 / KCTC 3260 / NRRL B-441) (Lactobacillus paracasei).